The sequence spans 130 residues: Small ribosomal subunit protein uS11 (130 aa).

Belongs to the universal ribosomal protein uS11 family. As to quaternary structure, part of the 30S ribosomal subunit. Interacts with proteins S7 and S18. Binds to IF-3.

Functionally, located on the platform of the 30S subunit, it bridges several disparate RNA helices of the 16S rRNA. Forms part of the Shine-Dalgarno cleft in the 70S ribosome. In Prochlorococcus marinus (strain AS9601), this protein is Small ribosomal subunit protein uS11.